The sequence spans 480 residues: Protein nucleotidyltransferase YdiU (480 aa).

8 residues coordinate ATP: glycine 86, glycine 88, arginine 89, lysine 109, aspartate 121, glycine 122, arginine 172, and arginine 179. The active-site Proton acceptor is the aspartate 248. Mg(2+) contacts are provided by asparagine 249 and aspartate 258. Aspartate 258 contributes to the ATP binding site.

This sequence belongs to the SELO family. It depends on Mg(2+) as a cofactor. Mn(2+) is required as a cofactor.

It carries out the reaction L-seryl-[protein] + ATP = 3-O-(5'-adenylyl)-L-seryl-[protein] + diphosphate. The enzyme catalyses L-threonyl-[protein] + ATP = 3-O-(5'-adenylyl)-L-threonyl-[protein] + diphosphate. It catalyses the reaction L-tyrosyl-[protein] + ATP = O-(5'-adenylyl)-L-tyrosyl-[protein] + diphosphate. The catalysed reaction is L-histidyl-[protein] + UTP = N(tele)-(5'-uridylyl)-L-histidyl-[protein] + diphosphate. It carries out the reaction L-seryl-[protein] + UTP = O-(5'-uridylyl)-L-seryl-[protein] + diphosphate. The enzyme catalyses L-tyrosyl-[protein] + UTP = O-(5'-uridylyl)-L-tyrosyl-[protein] + diphosphate. Its function is as follows. Nucleotidyltransferase involved in the post-translational modification of proteins. It can catalyze the addition of adenosine monophosphate (AMP) or uridine monophosphate (UMP) to a protein, resulting in modifications known as AMPylation and UMPylation. This chain is Protein nucleotidyltransferase YdiU, found in Salmonella paratyphi C (strain RKS4594).